The following is a 277-amino-acid chain: Large ribosomal subunit protein mL46 (277 aa).

Residue K228 is modified to N6-acetyllysine.

This sequence belongs to the mitochondrion-specific ribosomal protein mL46 family. Component of the mitochondrial ribosome large subunit (39S) which comprises a 16S rRNA and about 50 distinct proteins.

The protein localises to the mitochondrion. The sequence is that of Large ribosomal subunit protein mL46 (MRPL46) from Bos taurus (Bovine).